Consider the following 95-residue polypeptide: Aspartyl/glutamyl-tRNA(Asn/Gln) amidotransferase subunit C (95 aa).

The protein belongs to the GatC family. In terms of assembly, heterotrimer of A, B and C subunits.

The enzyme catalyses L-glutamyl-tRNA(Gln) + L-glutamine + ATP + H2O = L-glutaminyl-tRNA(Gln) + L-glutamate + ADP + phosphate + H(+). The catalysed reaction is L-aspartyl-tRNA(Asn) + L-glutamine + ATP + H2O = L-asparaginyl-tRNA(Asn) + L-glutamate + ADP + phosphate + 2 H(+). Its function is as follows. Allows the formation of correctly charged Asn-tRNA(Asn) or Gln-tRNA(Gln) through the transamidation of misacylated Asp-tRNA(Asn) or Glu-tRNA(Gln) in organisms which lack either or both of asparaginyl-tRNA or glutaminyl-tRNA synthetases. The reaction takes place in the presence of glutamine and ATP through an activated phospho-Asp-tRNA(Asn) or phospho-Glu-tRNA(Gln). This Vesicomyosocius okutanii subsp. Calyptogena okutanii (strain HA) protein is Aspartyl/glutamyl-tRNA(Asn/Gln) amidotransferase subunit C.